The chain runs to 270 residues: Interleukin-1 alpha (270 aa).

Residues Met1 to Arg112 constitute a propeptide that is removed on maturation. Lys82 carries the post-translational modification N6-acetyllysine. The interval Lys82–Leu86 is nuclear localization signal (NLS). Ser87 carries the phosphoserine modification. Residue Asn139 is glycosylated (N-linked (GlcNAc...) asparagine).

This sequence belongs to the IL-1 family. As to quaternary structure, monomer. Interacts with TMED10; the interaction mediates the translocation from the cytoplasm into the ERGIC (endoplasmic reticulum-Golgi intermediate compartment) and thereby secretion. Interacts with IL1R1. Interacts with S100A13; this interaction is the first step in the export of IL1A, followed by direct translocation of this complex across the plasma membrane. Post-translationally, acetylated within its nuclear localization sequence, which impacts subcellular localization. In terms of processing, proteolytic processed by CAPN1 in a calcium-dependent manner. Cleavage from 31 kDa precursor to 18 kDa biologically active molecules. Phosphorylated. Phosphorylation greatly enhances susceptibility to digestion and promotes the conversion of pre-IL1A alpha to the biologically active IL1A.

The protein localises to the nucleus. Its subcellular location is the cytoplasm. It localises to the secreted. In terms of biological role, cytokine constitutively present intracellularly in nearly all resting non-hematopoietic cells that plays an important role in inflammation and bridges the innate and adaptive immune systems. After binding to its receptor IL1R1 together with its accessory protein IL1RAP, forms the high affinity interleukin-1 receptor complex. Signaling involves the recruitment of adapter molecules such as MYD88, IRAK1 or IRAK4. In turn, mediates the activation of NF-kappa-B and the three MAPK pathways p38, p42/p44 and JNK pathways. Within the cell, acts as an alarmin and cell death results in its liberation in the extracellular space after disruption of the cell membrane to induce inflammation and alert the host to injury or damage. In addition to its role as a danger signal, which occurs when the cytokine is passively released by cell necrosis, directly senses DNA damage and acts as signal for genotoxic stress without loss of cell integrity. In Felis catus (Cat), this protein is Interleukin-1 alpha (IL1A).